A 106-amino-acid polypeptide reads, in one-letter code: PTS system fructose-like EIIB component 2 (106 aa).

In terms of domain architecture, PTS EIIB type-2 spans 1–103; the sequence is MTKIIAVTAC…IMSKIEAHLA (103 aa). The Phosphocysteine intermediate role is filled by Cys10. At Cys10 the chain carries Phosphocysteine; by EIIA.

The protein resides in the cytoplasm. It catalyses the reaction D-fructose(out) + N(pros)-phospho-L-histidyl-[protein] = D-fructose 1-phosphate(in) + L-histidyl-[protein]. In terms of biological role, the phosphoenolpyruvate-dependent sugar phosphotransferase system (sugar PTS), a major carbohydrate active transport system, catalyzes the phosphorylation of incoming sugar substrates concomitantly with their translocation across the cell membrane. The enzyme II FrwABC PTS system is involved in fructose transport. This is PTS system fructose-like EIIB component 2 (frwB) from Escherichia coli O157:H7.